Consider the following 75-residue polypeptide: ATP synthase subunit c (75 aa).

Transmembrane regions (helical) follow at residues 9-29 (IGAG…GNIW) and 52-72 (IGFA…LILL).

It belongs to the ATPase C chain family. As to quaternary structure, F-type ATPases have 2 components, F(1) - the catalytic core - and F(0) - the membrane proton channel. F(1) has five subunits: alpha(3), beta(3), gamma(1), delta(1), epsilon(1). F(0) has four main subunits: a(1), b(1), b'(1) and c(10-14). The alpha and beta chains form an alternating ring which encloses part of the gamma chain. F(1) is attached to F(0) by a central stalk formed by the gamma and epsilon chains, while a peripheral stalk is formed by the delta, b and b' chains.

It is found in the cell inner membrane. Functionally, f(1)F(0) ATP synthase produces ATP from ADP in the presence of a proton or sodium gradient. F-type ATPases consist of two structural domains, F(1) containing the extramembraneous catalytic core and F(0) containing the membrane proton channel, linked together by a central stalk and a peripheral stalk. During catalysis, ATP synthesis in the catalytic domain of F(1) is coupled via a rotary mechanism of the central stalk subunits to proton translocation. In terms of biological role, key component of the F(0) channel; it plays a direct role in translocation across the membrane. A homomeric c-ring of between 10-14 subunits forms the central stalk rotor element with the F(1) delta and epsilon subunits. The chain is ATP synthase subunit c from Rhodospirillum rubrum (strain ATCC 11170 / ATH 1.1.1 / DSM 467 / LMG 4362 / NCIMB 8255 / S1).